A 114-amino-acid polypeptide reads, in one-letter code: MLLKSTTRHIHIYTAEVENNELIPSESVLTLDVDPDNELVWSEDALQRVYAKFDELVETYSGEDLTDYNLRRIGSDLEHYVRSLLQKGIVGYNLSSRVRNFSMGLPQVIASESK.

Belongs to the complex I NdhM subunit family. NDH-1 can be composed of about 15 different subunits; different subcomplexes with different compositions have been identified which probably have different functions.

Its subcellular location is the cellular thylakoid membrane. It catalyses the reaction a plastoquinone + NADH + (n+1) H(+)(in) = a plastoquinol + NAD(+) + n H(+)(out). It carries out the reaction a plastoquinone + NADPH + (n+1) H(+)(in) = a plastoquinol + NADP(+) + n H(+)(out). Functionally, NDH-1 shuttles electrons from an unknown electron donor, via FMN and iron-sulfur (Fe-S) centers, to quinones in the respiratory and/or the photosynthetic chain. The immediate electron acceptor for the enzyme in this species is believed to be plastoquinone. Couples the redox reaction to proton translocation, and thus conserves the redox energy in a proton gradient. Cyanobacterial NDH-1 also plays a role in inorganic carbon-concentration. The protein is NAD(P)H-quinone oxidoreductase subunit M of Acaryochloris marina (strain MBIC 11017).